We begin with the raw amino-acid sequence, 153 residues long: Peptidyl-prolyl cis-trans isomerase FKBP15-1 (153 aa).

A signal peptide spans 1–25; sequence MMSSASAMKAVGFLLLLTILTLAYA. The PPIase FKBP-type domain occupies 52–140; it reads GDKIKVHYRG…IFDTELVAVN (89 aa). Residues 150–153 carry the Prevents secretion from ER motif; sequence KNEL.

This sequence belongs to the FKBP-type PPIase family.

It localises to the endoplasmic reticulum lumen. The catalysed reaction is [protein]-peptidylproline (omega=180) = [protein]-peptidylproline (omega=0). PPIases accelerate the folding of proteins. It catalyzes the cis-trans isomerization of proline imidic peptide bonds in oligopeptides. In Arabidopsis thaliana (Mouse-ear cress), this protein is Peptidyl-prolyl cis-trans isomerase FKBP15-1 (FKBP15-1).